A 348-amino-acid chain; its full sequence is Ion-translocating oxidoreductase complex subunit D (348 aa).

The next 5 helical transmembrane spans lie at 19–39 (FMLW…AFFG), 41–61 (GVVI…IVVA), 66–86 (KSTT…ILAM), 87–107 (AIPP…ALLL), and 122–142 (PAMV…TSWL). At Thr186 the chain carries FMN phosphoryl threonine. 5 helical membrane passes run 212–232 (IFAR…LFLL), 236–256 (IIHW…SALT), 265–285 (LNVL…FIAT), 291–311 (SITP…AYLI), and 315–335 (GSYP…VPLI).

It belongs to the NqrB/RnfD family. In terms of assembly, the complex is composed of six subunits: RnfA, RnfB, RnfC, RnfD, RnfE and RnfG. FMN serves as cofactor.

The protein localises to the cell inner membrane. Part of a membrane-bound complex that couples electron transfer with translocation of ions across the membrane. This chain is Ion-translocating oxidoreductase complex subunit D, found in Haemophilus ducreyi (strain 35000HP / ATCC 700724).